The chain runs to 752 residues: Myotubularin-related protein 10 (752 aa).

In terms of domain architecture, Myotubularin phosphatase spans 206 to 636; that stretch reads FDCSSDWDRE…SHLSVWKLYF (431 aa). Residues 652-683 adopt a coiled-coil conformation; sequence TAFHKLSVLTDEIEMLQNQLRQYKGAAGTANT.

The protein belongs to the protein-tyrosine phosphatase family. Non-receptor class myotubularin subfamily.

This Danio rerio (Zebrafish) protein is Myotubularin-related protein 10 (mtmr10).